A 338-amino-acid chain; its full sequence is MKSVGINGYGTIGKRVADAVSAQDDMKIVGVTKRSPDFEARMAVENGYDLYISVPERESSFEEAGIKVTGTADELLEKLDIVVDCTPEGIGAKNKEGTYEKMGLKAIFQGGEKHDQIGLSFNSFSNYNDVIGKDYARVVSCNTTGLCRTLNPINDLCGIKKVRAVMVRRGADPGQVKKGPINAIVPNPPTVPSHHGPDVQTVMYDLNITTMALLVPTTLMHQHNLMVELESSVSVDDIKEKLNETPRVLLLKAGEGLTSTAGFMEYAKDLGRSRNDLFEIGVWEESLNIVDGELYYMQAIHQESDVVPENVDAIRAMLEMENDPSKSIQKTNKAMGIL.

NAD(+)-binding positions include 11-12 (TI) and Gly111. 140 to 142 (SCN) lines the D-glyceraldehyde 3-phosphate pocket. Cys141 functions as the Nucleophile in the catalytic mechanism. An NAD(+)-binding site is contributed by Arg169. 195–196 (HG) contacts D-glyceraldehyde 3-phosphate. Gln302 lines the NAD(+) pocket.

This sequence belongs to the glyceraldehyde-3-phosphate dehydrogenase family. Homotetramer.

It is found in the cytoplasm. It catalyses the reaction D-glyceraldehyde 3-phosphate + phosphate + NADP(+) = (2R)-3-phospho-glyceroyl phosphate + NADPH + H(+). The enzyme catalyses D-glyceraldehyde 3-phosphate + phosphate + NAD(+) = (2R)-3-phospho-glyceroyl phosphate + NADH + H(+). Its pathway is carbohydrate degradation; glycolysis; pyruvate from D-glyceraldehyde 3-phosphate: step 1/5. This is Glyceraldehyde-3-phosphate dehydrogenase (gap) from Methanobacterium bryantii.